Reading from the N-terminus, the 616-residue chain is Dihydroxy-acid dehydratase (616 aa).

D81 contributes to the Mg(2+) binding site. C122 serves as a coordination point for [2Fe-2S] cluster. Residues D123 and K124 each contribute to the Mg(2+) site. At K124 the chain carries N6-carboxylysine. C195 contributes to the [2Fe-2S] cluster binding site. Mg(2+) is bound at residue E491. S517 (proton acceptor) is an active-site residue.

This sequence belongs to the IlvD/Edd family. In terms of assembly, homodimer. The cofactor is [2Fe-2S] cluster. It depends on Mg(2+) as a cofactor.

The enzyme catalyses (2R)-2,3-dihydroxy-3-methylbutanoate = 3-methyl-2-oxobutanoate + H2O. It carries out the reaction (2R,3R)-2,3-dihydroxy-3-methylpentanoate = (S)-3-methyl-2-oxopentanoate + H2O. It participates in amino-acid biosynthesis; L-isoleucine biosynthesis; L-isoleucine from 2-oxobutanoate: step 3/4. Its pathway is amino-acid biosynthesis; L-valine biosynthesis; L-valine from pyruvate: step 3/4. Functions in the biosynthesis of branched-chain amino acids. Catalyzes the dehydration of (2R,3R)-2,3-dihydroxy-3-methylpentanoate (2,3-dihydroxy-3-methylvalerate) into 2-oxo-3-methylpentanoate (2-oxo-3-methylvalerate) and of (2R)-2,3-dihydroxy-3-methylbutanoate (2,3-dihydroxyisovalerate) into 2-oxo-3-methylbutanoate (2-oxoisovalerate), the penultimate precursor to L-isoleucine and L-valine, respectively. The polypeptide is Dihydroxy-acid dehydratase (Salmonella gallinarum (strain 287/91 / NCTC 13346)).